A 331-amino-acid chain; its full sequence is Phosphoenolpyruvate transferase (331 aa).

Aspartate 63 contacts 7,8-didemethyl-8-hydroxy-5-deazariboflavin.

It belongs to the CofD family. In terms of assembly, homodimer. It depends on Mg(2+) as a cofactor.

The catalysed reaction is enolpyruvoyl-2-diphospho-5'-guanosine + 7,8-didemethyl-8-hydroxy-5-deazariboflavin = dehydro coenzyme F420-0 + GMP + H(+). It participates in cofactor biosynthesis; coenzyme F420 biosynthesis. Its function is as follows. Catalyzes the transfer of the phosphoenolpyruvate moiety from enoylpyruvoyl-2-diphospho-5'-guanosine (EPPG) to 7,8-didemethyl-8-hydroxy-5-deazariboflavin (FO) with the formation of dehydro coenzyme F420-0 and GMP. This is Phosphoenolpyruvate transferase from Mycobacterium sp. (strain KMS).